Reading from the N-terminus, the 407-residue chain is MEGIDLGNAFAQSLSGLGVPADVARALWLPLPMIVILLTVTVGVIAAVWGERKWSGMMQQRMGPTIIGLGGSIQGAADGVKLLVKEDIIPVKADPWLFTLGPAIVIIPVFFSYLVIPFGQGLVLSDITIGIFFIIAVASISPIGALMAGYASNNKYALLGGLRAAAQSISYEIPLALSVLAIVMMSSSLSTVDIVEQQETLGLFSFFSWNIWRQPIGFVIFLISALAETERAPFDLPEAESELVAGHHTEYTGMKFALFYLSEYANLILASLIASVLFLGGWSFIVPLEPLAALFGIEASNPIFQVVNALVGISVTILKATFFVFLAILARWTLPRVRIDQLLDLGWKFLLPVSLFNLLLTAALVLLSNTLKTTLPLYLPLIIFVGLVFVAMSLQKRPAAKPTAARA.

The next 9 membrane-spanning stretches (helical) occupy residues 28-48, 96-116, 127-147, 175-195, 203-223, 267-287, 309-329, 347-367, and 374-394; these read WLPL…IAAV, WLFT…YLVI, ITIG…GALM, LALS…VDIV, LFSF…IFLI, LILA…FIVP, ALVG…LAIL, WKFL…LVLL, and TLPL…AMSL.

This sequence belongs to the complex I subunit 1 family. NDH-1 is composed of at least 11 different subunits.

The protein resides in the cell inner membrane. It carries out the reaction a plastoquinone + NADH + (n+1) H(+)(in) = a plastoquinol + NAD(+) + n H(+)(out). It catalyses the reaction a plastoquinone + NADPH + (n+1) H(+)(in) = a plastoquinol + NADP(+) + n H(+)(out). Its function is as follows. NDH-1 shuttles electrons from an unknown electron donor, via FMN and iron-sulfur (Fe-S) centers, to quinones in the respiratory and/or the photosynthetic chain. The immediate electron acceptor for the enzyme in this species is believed to be plastoquinone. Couples the redox reaction to proton translocation, and thus conserves the redox energy in a proton gradient. This is NAD(P)H-quinone oxidoreductase subunit 1 from Gloeobacter violaceus (strain ATCC 29082 / PCC 7421).